The primary structure comprises 399 residues: Beta sliding clamp (399 aa).

Belongs to the beta sliding clamp family. In terms of assembly, forms a ring-shaped head-to-tail homodimer around DNA which binds and tethers DNA polymerases and other proteins to the DNA. The DNA replisome complex has a single clamp-loading complex (3 tau and 1 each of delta, delta', psi and chi subunits) which binds 3 Pol III cores (1 core on the leading strand and 2 on the lagging strand) each with a beta sliding clamp dimer. Additional proteins in the replisome are other copies of gamma, psi and chi, Ssb, DNA helicase and RNA primase.

The protein localises to the cytoplasm. Confers DNA tethering and processivity to DNA polymerases and other proteins. Acts as a clamp, forming a ring around DNA (a reaction catalyzed by the clamp-loading complex) which diffuses in an ATP-independent manner freely and bidirectionally along dsDNA. Initially characterized for its ability to contact the catalytic subunit of DNA polymerase III (Pol III), a complex, multichain enzyme responsible for most of the replicative synthesis in bacteria; Pol III exhibits 3'-5' exonuclease proofreading activity. The beta chain is required for initiation of replication as well as for processivity of DNA replication. This is Beta sliding clamp (dnaN) from Mycobacterium leprae (strain TN).